Consider the following 148-residue polypeptide: SsrA-binding protein (148 aa).

This sequence belongs to the SmpB family.

It localises to the cytoplasm. Required for rescue of stalled ribosomes mediated by trans-translation. Binds to transfer-messenger RNA (tmRNA), required for stable association of tmRNA with ribosomes. tmRNA and SmpB together mimic tRNA shape, replacing the anticodon stem-loop with SmpB. tmRNA is encoded by the ssrA gene; the 2 termini fold to resemble tRNA(Ala) and it encodes a 'tag peptide', a short internal open reading frame. During trans-translation Ala-aminoacylated tmRNA acts like a tRNA, entering the A-site of stalled ribosomes, displacing the stalled mRNA. The ribosome then switches to translate the ORF on the tmRNA; the nascent peptide is terminated with the 'tag peptide' encoded by the tmRNA and targeted for degradation. The ribosome is freed to recommence translation, which seems to be the essential function of trans-translation. The chain is SsrA-binding protein from Ehrlichia ruminantium (strain Welgevonden).